We begin with the raw amino-acid sequence, 315 residues long: Acetyl-coenzyme A carboxylase carboxyl transferase subunit alpha (315 aa).

In terms of domain architecture, CoA carboxyltransferase C-terminal spans 39 to 293; the sequence is RLQDKSSTLT…RADLIEQLDM (255 aa).

Belongs to the AccA family. As to quaternary structure, acetyl-CoA carboxylase is a heterohexamer composed of biotin carboxyl carrier protein (AccB), biotin carboxylase (AccC) and two subunits each of ACCase subunit alpha (AccA) and ACCase subunit beta (AccD).

It localises to the cytoplasm. The catalysed reaction is N(6)-carboxybiotinyl-L-lysyl-[protein] + acetyl-CoA = N(6)-biotinyl-L-lysyl-[protein] + malonyl-CoA. It functions in the pathway lipid metabolism; malonyl-CoA biosynthesis; malonyl-CoA from acetyl-CoA: step 1/1. In terms of biological role, component of the acetyl coenzyme A carboxylase (ACC) complex. First, biotin carboxylase catalyzes the carboxylation of biotin on its carrier protein (BCCP) and then the CO(2) group is transferred by the carboxyltransferase to acetyl-CoA to form malonyl-CoA. The sequence is that of Acetyl-coenzyme A carboxylase carboxyl transferase subunit alpha from Pseudomonas entomophila (strain L48).